Consider the following 245-residue polypeptide: Endogenous retrovirus group K member 5 Env polyprotein (245 aa).

Residues Met1–Leu245 are truncated surface protein.

It belongs to the beta type-B retroviral envelope protein family. HERV class-II K(HML-2) env subfamily. As to expression, expressed in lung, placenta, testis, peripheral blood lymphocytes, and teratocarcinoma cell lines.

The protein localises to the virion. Retroviral envelope proteins mediate receptor recognition and membrane fusion during early infection. Endogenous envelope proteins may have kept, lost or modified their original function during evolution. The sequence is that of Endogenous retrovirus group K member 5 Env polyprotein (ERVK-5) from Homo sapiens (Human).